A 318-amino-acid chain; its full sequence is Putative fimbrium tip subunit Fim1F (318 aa).

Positions methionine 1–glutamate 24 are cleaved as a signal peptide. Positions valine 25–lysine 50 are excised as a propeptide.

This sequence belongs to the bacteroidetes fimbrillin superfamily. FimA/Mfa1 family. May be part of the fimbrial tip.

The protein resides in the fimbrium. Its function is as follows. Putative component of the fimbrium tip. Fimbriae are filamentous appendages on the cell surface that mediate cell adhesion and biofilm formation. The chain is Putative fimbrium tip subunit Fim1F from Parabacteroides distasonis (strain ATCC 8503 / DSM 20701 / CIP 104284 / JCM 5825 / NCTC 11152).